A 411-amino-acid chain; its full sequence is Heparan-sulfate 6-O-sulfotransferase 1 (411 aa).

Residues 1 to 19 (MRRRRAGGRTMVERASKFV) lie on the Cytoplasmic side of the membrane. The chain crosses the membrane as a helical; Signal-anchor for type II membrane protein span at residues 20–37 (LVVAGSACFMLILYQYAG). At 38 to 411 (PGLSLGAPGG…DYMSHIIEKW (374 aa)) the chain is on the lumenal side. 93 to 101 (HIQKTGGTT) serves as a coordination point for 3'-phosphoadenylyl sulfate. Substrate is bound by residues 123–124 (KK), arginine 140, tryptophan 145, and histidine 150. Histidine 150 functions as the Proton acceptor in the catalytic mechanism. The 3'-phosphoadenylyl sulfate site is built by arginine 185 and serine 193. 2 residues coordinate substrate: histidine 197 and tryptophan 204. Residue asparagine 264 is glycosylated (N-linked (GlcNAc...) asparagine). Position 317–319 (317–319 (MQY)) interacts with 3'-phosphoadenylyl sulfate. N-linked (GlcNAc...) asparagine glycosylation occurs at asparagine 320. 323–324 (RA) contacts 3'-phosphoadenylyl sulfate. Residues 352 to 386 (KDLFQQRYQYKRQLERREQRLRNREERLLHRSKEA) adopt a coiled-coil conformation. The disordered stretch occupies residues 380 to 401 (LHRSKEALPREDPEEPGRVPTE).

It belongs to the sulfotransferase 6 family. N-glycosylated. In terms of tissue distribution, expressed in fetal brain and liver.

It localises to the membrane. The enzyme catalyses alpha-D-glucosaminyl-[heparan sulfate](n) + 3'-phosphoadenylyl sulfate = 6-sulfo-alpha-D-glucosaminyl-[heparan sulfate](n) + adenosine 3',5'-bisphosphate + H(+). In terms of biological role, 6-O-sulfation enzyme which catalyzes the transfer of sulfate from 3'-phosphoadenosine 5'-phosphosulfate (PAPS) to position 6 of the N-sulfoglucosamine residue (GlcNS) of heparan sulfate. Critical for normal neuronal development where it may play a role in neuron branching. May also play a role in limb development. May prefer iduronic acid. The sequence is that of Heparan-sulfate 6-O-sulfotransferase 1 from Mus musculus (Mouse).